A 405-amino-acid chain; its full sequence is 4-hydroxy-3-methylbut-2-en-1-yl diphosphate synthase (flavodoxin) (405 aa).

The [4Fe-4S] cluster site is built by C297, C300, C343, and E350.

It belongs to the IspG family. Requires [4Fe-4S] cluster as cofactor.

The enzyme catalyses (2E)-4-hydroxy-3-methylbut-2-enyl diphosphate + oxidized [flavodoxin] + H2O + 2 H(+) = 2-C-methyl-D-erythritol 2,4-cyclic diphosphate + reduced [flavodoxin]. The protein operates within isoprenoid biosynthesis; isopentenyl diphosphate biosynthesis via DXP pathway; isopentenyl diphosphate from 1-deoxy-D-xylulose 5-phosphate: step 5/6. Converts 2C-methyl-D-erythritol 2,4-cyclodiphosphate (ME-2,4cPP) into 1-hydroxy-2-methyl-2-(E)-butenyl 4-diphosphate. The chain is 4-hydroxy-3-methylbut-2-en-1-yl diphosphate synthase (flavodoxin) from Francisella tularensis subsp. tularensis (strain FSC 198).